Here is a 450-residue protein sequence, read N- to C-terminus: 3-phosphoshikimate 1-carboxyvinyltransferase (450 aa).

Residues Lys28, Ser29, and Arg33 each coordinate 3-phosphoshikimate. Lys28 is a phosphoenolpyruvate binding site. The phosphoenolpyruvate site is built by Gly100 and Arg128. Positions 173, 175, 326, and 353 each coordinate 3-phosphoshikimate. Gln175 provides a ligand contact to phosphoenolpyruvate. The active-site Proton acceptor is Asp326. Residues Arg357 and Arg402 each contribute to the phosphoenolpyruvate site.

The protein belongs to the EPSP synthase family. As to quaternary structure, monomer.

The protein resides in the cytoplasm. It catalyses the reaction 3-phosphoshikimate + phosphoenolpyruvate = 5-O-(1-carboxyvinyl)-3-phosphoshikimate + phosphate. It participates in metabolic intermediate biosynthesis; chorismate biosynthesis; chorismate from D-erythrose 4-phosphate and phosphoenolpyruvate: step 6/7. Its function is as follows. Catalyzes the transfer of the enolpyruvyl moiety of phosphoenolpyruvate (PEP) to the 5-hydroxyl of shikimate-3-phosphate (S3P) to produce enolpyruvyl shikimate-3-phosphate and inorganic phosphate. The protein is 3-phosphoshikimate 1-carboxyvinyltransferase of Brucella abortus biovar 1 (strain 9-941).